The sequence spans 591 residues: ATP-dependent RNA helicase HAS1 (591 aa).

Residues 1–11 (MDFASSKKRKF) show a composition bias toward basic residues. The segment at 1–108 (MDFASSKKRK…PNGGQLTLPP (108 aa)) is disordered. Acidic residues predominate over residues 45–92 (DEPEDDSSDEEEQALKEVEDESDQADEDVEAANSAEEEEEEGGDEDNA). The Q motif signature appears at 115 to 143 (QSFEELKLSEKTMKAINEMKFTKMTEIQR). Residues 146–321 (IPPSLAGRDV…RISLRPGPLY (176 aa)) form the Helicase ATP-binding domain. 159 to 166 (AKTGSGKT) lines the ATP pocket. Residues 268 to 271 (DEAD) carry the DEAD box motif. Positions 335–495 (GLEQGYIICE…EFNFPTKKII (161 aa)) constitute a Helicase C-terminal domain. The Bipartite nuclear localization signal signature appears at 347-363 (MRFLLLFSFLKRNLKKK). Residues 560–591 (TLGASMSRDKKQQGRRAYGSQPRQNQGNKFTR) form a disordered region. Over residues 580 to 591 (QPRQNQGNKFTR) the composition is skewed to polar residues.

The protein belongs to the DEAD box helicase family. DDX18/HAS1 subfamily. As to quaternary structure, associates in the nucleolus with the 60S and pre-60S ribosomal subunits.

It is found in the nucleus. The protein localises to the nucleolus. It carries out the reaction ATP + H2O = ADP + phosphate + H(+). In terms of biological role, ATP-dependent RNA helicase involved in 40S ribosomal subunit biogenesis. Required for the processing and cleavage of 35S pre-rRNA at sites A0, A1, and A2, leading to mature 18S rRNA. The polypeptide is ATP-dependent RNA helicase HAS1 (HAS1) (Gibberella zeae (strain ATCC MYA-4620 / CBS 123657 / FGSC 9075 / NRRL 31084 / PH-1) (Wheat head blight fungus)).